Reading from the N-terminus, the 352-residue chain is Protein RecA (352 aa).

67-74 (GPESSGKT) serves as a coordination point for ATP.

This sequence belongs to the RecA family.

It localises to the cytoplasm. Its function is as follows. Can catalyze the hydrolysis of ATP in the presence of single-stranded DNA, the ATP-dependent uptake of single-stranded DNA by duplex DNA, and the ATP-dependent hybridization of homologous single-stranded DNAs. It interacts with LexA causing its activation and leading to its autocatalytic cleavage. This is Protein RecA from Enterobacter sp. (strain 638).